Reading from the N-terminus, the 270-residue chain is Putative phosphoenolpyruvate synthase regulatory protein (270 aa).

Residue 150–157 (GVSRCGKT) participates in ADP binding.

Belongs to the pyruvate, phosphate/water dikinase regulatory protein family. PSRP subfamily.

The catalysed reaction is [pyruvate, water dikinase] + ADP = [pyruvate, water dikinase]-phosphate + AMP + H(+). It carries out the reaction [pyruvate, water dikinase]-phosphate + phosphate + H(+) = [pyruvate, water dikinase] + diphosphate. Functionally, bifunctional serine/threonine kinase and phosphorylase involved in the regulation of the phosphoenolpyruvate synthase (PEPS) by catalyzing its phosphorylation/dephosphorylation. This chain is Putative phosphoenolpyruvate synthase regulatory protein, found in Shewanella baltica (strain OS223).